The following is a 249-amino-acid chain: Acetylglutamate kinase (249 aa).

Residues 38–39 (GG), Arg-60, and Asn-147 each bind substrate.

It belongs to the acetylglutamate kinase family. ArgB subfamily.

The protein localises to the cytoplasm. It catalyses the reaction N-acetyl-L-glutamate + ATP = N-acetyl-L-glutamyl 5-phosphate + ADP. Its pathway is amino-acid biosynthesis; L-arginine biosynthesis; N(2)-acetyl-L-ornithine from L-glutamate: step 2/4. Functionally, catalyzes the ATP-dependent phosphorylation of N-acetyl-L-glutamate. This Deinococcus geothermalis (strain DSM 11300 / CIP 105573 / AG-3a) protein is Acetylglutamate kinase.